Here is a 692-residue protein sequence, read N- to C-terminus: MSSIKGNKLEEQGPRPLQPTPGLMEGNKLEEQDSSPPQSTPGLMKGDKREEQGLGPEPAAPQQPTAEEEALIEFHRSYRELFEFFCNNTTIHGAIRLVCSQHNRMKTAFWAVLWLCTFGMMYWQFGLLFGEYFSYPVSLNINLNSDKLVFPAVTICTLNPYRYPEIKEELEELDRITEQTLFDLYKYSSFTTLVAGSRSRRDLRGTLPHPLQRLRVPPPPHGARRARSVASSVRDNNPQVDWKDWKIGFQLCNQNKSDCFYQTYSSGVDAVREWYRFHYINILSRLPETLPSLEKDTLGNFIFACRFNQVSCNQANYSHFHHPMYGNCYTFNDKNNSNLWMSSMPGINNGLSLMLRAEQNDFIPLLSTVTGARVMVHGQDEPAFMDDGGFNLRPGVETSISMRKETLDRLGGDYGDCTKNGSDVPVENLYPSKYTQQVCIHSCFQESMIKECGCAYIFYPRPQNVEYCDYRKHSSWGYCYYKLQVDFSSDHLGCFTKCRKPCSVTSYQLSAGYSRWPSVTSQEWVFQMLSRQNNYTVNNKRNGVAKVNIFFKELNYKTNSESPSVTMVTLLSNLGSQWSLWFGSSVLSVVEMAELIFDLLVITFLMLLRRFRSRYWSPGRGGRGAQEVASTLASSPPSHFCPHPTSLSLSQPGPAPSPALTAPPPAYATLGPRPSPGGSTGAGSSACPLGGP.

The interval 1–67 (MSSIKGNKLE…PAAPQQPTAE (67 aa)) is disordered. At 1–108 (MSSIKGNKLE…CSQHNRMKTA (108 aa)) the chain is on the cytoplasmic side. The segment covering 56-65 (PEPAAPQQPT) has biased composition (low complexity). A helical membrane pass occupies residues 109 to 129 (FWAVLWLCTFGMMYWQFGLLF). The Extracellular segment spans residues 130–585 (GEYFSYPVSL…SQWSLWFGSS (456 aa)). 10 disulfide bridges follow: C156–C328, C252–C259, C305–C312, C417–C502, C439–C479, C439–C498, C443–C494, C452–C479, C452–C502, and C454–C468. The gating release of inhibition by proteolysis (GRIP); protease-sensitive region that is responsible for the proteolytic activation of the channel stretch occupies residues 198–266 (RSRRDLRGTL…SDCFYQTYSS (69 aa)). A helical transmembrane segment spans residues 586-606 (VLSVVEMAELIFDLLVITFLM). Residues 607–692 (LLRRFRSRYW…GSSACPLGGP (86 aa)) are Cytoplasmic-facing. Residues 627-692 (EVASTLASSP…GSSACPLGGP (66 aa)) form a disordered region. Over residues 628-637 (VASTLASSPP) the composition is skewed to polar residues. The span at 653-666 (GPAPSPALTAPPPA) shows a compositional bias: pro residues. The short motif at 663 to 667 (PPPAY) is the PY motif; recruits WW domain-containing proteins and is thereby required for ubiquitination and inhibition of the channel by NEDD4 and NEDD4L element. Low complexity predominate over residues 682–692 (AGSSACPLGGP).

This sequence belongs to the amiloride-sensitive sodium channel (TC 1.A.6) family. SCNN1A subfamily. Heterotrimer; containing an alpha/SCNN1A, a beta/SCNN1B and a gamma/SCNN1G subunit. Interacts with WWP1 (via WW domains). Interacts with WWP2 (via WW domains); inhibits the channel. Interacts with BPIFA1; the interaction is indirect via SCNN1B and inhibits the proteolytic processing of SCNN1A and SCNN1G and the activation of ENaC. Interacts with the full-length immature form of PCSK9 (pro-PCSK9). Ubiquitinated. Can be ubiquitinated at multiple sites and undergo monoubiquitination and polyubiquitination. Ubiquitination by NEDD4 or NEDD4L inhibits the ENaC channel through endocytosis, intracellular retention and degradation of its individual subunits. In terms of processing, N-glycosylated. Post-translationally, ENaC is activated through the proteolytic maturation of its subunits. Furin cleaves the SCNN1A subunit, which results in a stepwise increase in the open probability of the channel due to the release of an inhibitory tract. BPIFA1, which is recruited by the SCNN1B subunit, prevents the proteolytic activation of ENaC.

Its subcellular location is the apical cell membrane. The protein localises to the cell projection. It localises to the cilium. It is found in the cytoplasmic granule. The protein resides in the cytoplasm. Its subcellular location is the cytoplasmic vesicle. The protein localises to the secretory vesicle. It localises to the acrosome. It is found in the flagellum. The enzyme catalyses Na(+)(in) = Na(+)(out). Originally identified and characterized by its inhibition by the diuretic drug amiloride. In terms of biological role, this is one of the three pore-forming subunits of the heterotrimeric epithelial sodium channel (ENaC), a critical regulator of sodium balance and fluid homeostasis. ENaC operates in epithelial tissues, where it mediates the electrodiffusion of sodium ions from extracellular fluid through the apical membrane of cells, with water following osmotically. It plays a key role in maintaining sodium homeostasis through electrogenic sodium reabsorption in the kidneys. Additionally, ENaC is essential for airway surface liquid homeostasis, which is crucial for proper mucus clearance. The polypeptide is Epithelial sodium channel subunit alpha (Pan troglodytes (Chimpanzee)).